The following is a 177-amino-acid chain: ATP synthase subunit delta (177 aa).

This sequence belongs to the ATPase delta chain family. In terms of assembly, F-type ATPases have 2 components, F(1) - the catalytic core - and F(0) - the membrane proton channel. F(1) has five subunits: alpha(3), beta(3), gamma(1), delta(1), epsilon(1). F(0) has three main subunits: a(1), b(2) and c(10-14). The alpha and beta chains form an alternating ring which encloses part of the gamma chain. F(1) is attached to F(0) by a central stalk formed by the gamma and epsilon chains, while a peripheral stalk is formed by the delta and b chains.

Its subcellular location is the cell inner membrane. In terms of biological role, f(1)F(0) ATP synthase produces ATP from ADP in the presence of a proton or sodium gradient. F-type ATPases consist of two structural domains, F(1) containing the extramembraneous catalytic core and F(0) containing the membrane proton channel, linked together by a central stalk and a peripheral stalk. During catalysis, ATP synthesis in the catalytic domain of F(1) is coupled via a rotary mechanism of the central stalk subunits to proton translocation. Its function is as follows. This protein is part of the stalk that links CF(0) to CF(1). It either transmits conformational changes from CF(0) to CF(1) or is implicated in proton conduction. This Shewanella baltica (strain OS223) protein is ATP synthase subunit delta.